Here is a 465-residue protein sequence, read N- to C-terminus: Fusarisetin A cluster transcription factor fsa5 (465 aa).

Positions 13–47 (CDRCRSHKLKCTVAPENTRSGSSRCTRCIRAQVTC) form a DNA-binding region, zn(2)-C6 fungal-type. The segment at 58 to 88 (STNVKKADLRSGTNGQETTSMQASTIVPGSP) is disordered. Over residues 68-84 (SGTNGQETTSMQASTIV) the composition is skewed to polar residues.

It localises to the nucleus. Functionally, transcription activator that specifically regulates the expression of the gene cluster that mediates the biosynthesis of fusarisetin A. The chain is Fusarisetin A cluster transcription factor fsa5 from Fusarium sp. (strain FN080326).